The primary structure comprises 205 residues: Peptidyl-tRNA hydrolase (205 aa).

TRNA is bound at residue Tyr14. The Proton acceptor role is filled by His19. The tRNA site is built by Tyr68, Asn70, and Asn116.

It belongs to the PTH family. As to quaternary structure, monomer.

The protein localises to the cytoplasm. The enzyme catalyses an N-acyl-L-alpha-aminoacyl-tRNA + H2O = an N-acyl-L-amino acid + a tRNA + H(+). Functionally, hydrolyzes ribosome-free peptidyl-tRNAs (with 1 or more amino acids incorporated), which drop off the ribosome during protein synthesis, or as a result of ribosome stalling. In terms of biological role, catalyzes the release of premature peptidyl moieties from peptidyl-tRNA molecules trapped in stalled 50S ribosomal subunits, and thus maintains levels of free tRNAs and 50S ribosomes. This chain is Peptidyl-tRNA hydrolase, found in Caulobacter vibrioides (strain ATCC 19089 / CIP 103742 / CB 15) (Caulobacter crescentus).